Reading from the N-terminus, the 429-residue chain is Malate dehydrogenase [NADP] 1, chloroplastic (429 aa).

The transit peptide at 1–40 (MGLSTAYSPVGSHLAPAPLGHRRSAQLHRPRRALLATVRC) directs the protein to the chloroplast. An intrachain disulfide couples C64 to C69. 93–99 (GAAGMIS) is a binding site for NADP(+). Substrate-binding residues include R174 and R180. NADP(+)-binding positions include N187, Q194, and 211–213 (VGN). Substrate contacts are provided by N213 and R244. H269 acts as the Proton acceptor in catalysis. C405 and C417 are disulfide-bonded.

Belongs to the LDH/MDH superfamily. MDH type 2 family. In terms of assembly, homodimer.

The protein localises to the plastid. It localises to the chloroplast. The catalysed reaction is (S)-malate + NADP(+) = oxaloacetate + NADPH + H(+). Chloroplast NADP-MDH is activated upon illumination. In order to be enzymatically active, disulfide bridges on the protein must be reduced by thioredoxin which receives electrons from ferredoxin and the electron transport system of photosynthesis. Its function is as follows. The chloroplastic, NADP-dependent form is essential for the photosynthesis C4 cycle, which allows plants to circumvent the problem of photorespiration. In C4 plants, NADP-MDH activity acts to convert oxaloacetate to malate in chloroplasts of mesophyll cells for transport to the bundle sheath cells. The chain is Malate dehydrogenase [NADP] 1, chloroplastic from Sorghum bicolor (Sorghum).